Here is a 247-residue protein sequence, read N- to C-terminus: Mycofactocin precursor peptide peptidase (247 aa).

A divalent metal cation contacts are provided by E38, H40, D49, H124, and E163.

The protein belongs to the creatininase superfamily. As to quaternary structure, homooctamer. The cofactor is Fe(2+). It depends on Zn(2+) as a cofactor.

It carries out the reaction [mycofactocin precursor peptide]-C-terminal glycyl-N-{5-[(4-hydroxyphenyl)methyl]-4,4-dimethyl-2-oxopyrrolidin-3-yl}acetamide + H2O = [mycofactocin precursor peptide]-C-terminal glycine + 3-amino-5-[(4-hydroxyphenyl)methyl]-4,4-dimethyl-2-pyrrolidin-2-one. In terms of biological role, peptidase involved in the biosynthesis of the enzyme cofactor mycofactocin (MFT). Catalyzes cleavage of the MftC-modified MftA peptide to liberate its final two residues, which consist of a cross-linked valine-decarboxylated tyrosine dipeptide (named 3-amino-5-[(4-hydroxyphenyl)methyl]-4,4-dimethyl-2-pyrrolidin-2-one or ADHP). Is required for the in vivo ethanol assimilation in M.smegmatis. The protein is Mycofactocin precursor peptide peptidase of Mycolicibacterium smegmatis (strain ATCC 700084 / mc(2)155) (Mycobacterium smegmatis).